A 323-amino-acid chain; its full sequence is ADP-L-glycero-D-manno-heptose-6-epimerase (323 aa).

NADP(+) is bound by residues 10-11 (FI), 31-32 (DN), Lys-38, Lys-53, 75-79 (EGACS), and Asn-92. Tyr-139 serves as the catalytic Proton acceptor. Lys-143 provides a ligand contact to NADP(+). Asn-168 is a binding site for substrate. Positions 169 and 177 each coordinate NADP(+). Lys-177 serves as the catalytic Proton acceptor. Substrate is bound by residues Asp-179, Lys-186, 200-203 (FGAY), Arg-213, and Tyr-277.

Belongs to the NAD(P)-dependent epimerase/dehydratase family. HldD subfamily. In terms of assembly, homopentamer. NADP(+) serves as cofactor.

The catalysed reaction is ADP-D-glycero-beta-D-manno-heptose = ADP-L-glycero-beta-D-manno-heptose. Its pathway is nucleotide-sugar biosynthesis; ADP-L-glycero-beta-D-manno-heptose biosynthesis; ADP-L-glycero-beta-D-manno-heptose from D-glycero-beta-D-manno-heptose 7-phosphate: step 4/4. Its function is as follows. Catalyzes the interconversion between ADP-D-glycero-beta-D-manno-heptose and ADP-L-glycero-beta-D-manno-heptose via an epimerization at carbon 6 of the heptose. The protein is ADP-L-glycero-D-manno-heptose-6-epimerase of Hydrogenovibrio crunogenus (strain DSM 25203 / XCL-2) (Thiomicrospira crunogena).